We begin with the raw amino-acid sequence, 1393 residues long: DNA-directed RNA polymerase subunit beta' (1393 aa).

Zn(2+)-binding residues include C72, C74, C87, and C90. Mg(2+) contacts are provided by D463, D465, and D467. Zn(2+) is bound by residues C812, C887, C894, and C897.

It belongs to the RNA polymerase beta' chain family. The RNAP catalytic core consists of 2 alpha, 1 beta, 1 beta' and 1 omega subunit. When a sigma factor is associated with the core the holoenzyme is formed, which can initiate transcription. Mg(2+) is required as a cofactor. Requires Zn(2+) as cofactor.

It carries out the reaction RNA(n) + a ribonucleoside 5'-triphosphate = RNA(n+1) + diphosphate. Functionally, DNA-dependent RNA polymerase catalyzes the transcription of DNA into RNA using the four ribonucleoside triphosphates as substrates. In Chlamydia pneumoniae (Chlamydophila pneumoniae), this protein is DNA-directed RNA polymerase subunit beta'.